The primary structure comprises 367 residues: uncharacterized protein (367 aa).

Helical transmembrane passes span 35–55, 61–81, 92–112, and 113–133; these read YVYDISLIAISILCIVSIILW, LALFAIAPALAIGALGVTLLV, EVADTVAAVSLPFILTGTAAG, and LMFSAIAVGGGAVILANPLFL. Disordered stretches follow at residues 177–220, 249–283, and 296–367; these read KLPK…PASI, SNIKKELPNTKSILHTPLNRRSPSGSDSDDVYYTP, and GDIS…SRPK. Polar residues predominate over residues 257–274; sequence NTKSILHTPLNRRSPSGS. Positions 302–312 are enriched in low complexity; sequence SSSSTSSKTST. A compositionally biased stretch (basic and acidic residues) spans 323–342; it reads SRSERNARHHRNKEDHRQNQ. Residues 357-367 show a composition bias toward basic residues; the sequence is PRRKKYRSRPK.

Belongs to the chlamydial CPn_0443/CT_005/TC_0273 family.

The protein resides in the cell membrane. This is an uncharacterized protein from Chlamydia muridarum (strain MoPn / Nigg).